A 527-amino-acid chain; its full sequence is Bifunctional purine biosynthesis protein PurH (527 aa).

Residues 1-149 (MTADLLPVRR…KNFARVAVAT (149 aa)) form the MGS-like domain.

It belongs to the PurH family.

The enzyme catalyses (6R)-10-formyltetrahydrofolate + 5-amino-1-(5-phospho-beta-D-ribosyl)imidazole-4-carboxamide = 5-formamido-1-(5-phospho-D-ribosyl)imidazole-4-carboxamide + (6S)-5,6,7,8-tetrahydrofolate. It carries out the reaction IMP + H2O = 5-formamido-1-(5-phospho-D-ribosyl)imidazole-4-carboxamide. It functions in the pathway purine metabolism; IMP biosynthesis via de novo pathway; 5-formamido-1-(5-phospho-D-ribosyl)imidazole-4-carboxamide from 5-amino-1-(5-phospho-D-ribosyl)imidazole-4-carboxamide (10-formyl THF route): step 1/1. Its pathway is purine metabolism; IMP biosynthesis via de novo pathway; IMP from 5-formamido-1-(5-phospho-D-ribosyl)imidazole-4-carboxamide: step 1/1. The polypeptide is Bifunctional purine biosynthesis protein PurH (Stenotrophomonas maltophilia (strain K279a)).